Reading from the N-terminus, the 404-residue chain is Probable tRNA sulfurtransferase (404 aa).

The 106-residue stretch at 60–165 (QPIVEALKLV…DEAAYISYEE (106 aa)) folds into the THUMP domain. Residues 183-184 (ML), 208-209 (HF), R265, G287, and Q296 each bind ATP.

It belongs to the ThiI family.

Its subcellular location is the cytoplasm. It carries out the reaction [ThiI sulfur-carrier protein]-S-sulfanyl-L-cysteine + a uridine in tRNA + 2 reduced [2Fe-2S]-[ferredoxin] + ATP + H(+) = [ThiI sulfur-carrier protein]-L-cysteine + a 4-thiouridine in tRNA + 2 oxidized [2Fe-2S]-[ferredoxin] + AMP + diphosphate. The catalysed reaction is [ThiS sulfur-carrier protein]-C-terminal Gly-Gly-AMP + S-sulfanyl-L-cysteinyl-[cysteine desulfurase] + AH2 = [ThiS sulfur-carrier protein]-C-terminal-Gly-aminoethanethioate + L-cysteinyl-[cysteine desulfurase] + A + AMP + 2 H(+). The protein operates within cofactor biosynthesis; thiamine diphosphate biosynthesis. Catalyzes the ATP-dependent transfer of a sulfur to tRNA to produce 4-thiouridine in position 8 of tRNAs, which functions as a near-UV photosensor. Also catalyzes the transfer of sulfur to the sulfur carrier protein ThiS, forming ThiS-thiocarboxylate. This is a step in the synthesis of thiazole, in the thiamine biosynthesis pathway. The sulfur is donated as persulfide by IscS. This is Probable tRNA sulfurtransferase from Streptococcus pyogenes serotype M49 (strain NZ131).